Here is a 638-residue protein sequence, read N- to C-terminus: Chaperone protein HtpG (638 aa).

Positions 1–343 (MTSTIDSDGA…SADLPLNISR (343 aa)) are a; substrate-binding. Positions 344 to 557 (EMIQESPILA…ESGPDRQLEK (214 aa)) are b. Positions 558-638 (ILVGVGQLTG…VERGLRGSTA (81 aa)) are c.

It belongs to the heat shock protein 90 family. In terms of assembly, homodimer.

Its subcellular location is the cytoplasm. Functionally, molecular chaperone. Has ATPase activity. This chain is Chaperone protein HtpG, found in Nitrobacter hamburgensis (strain DSM 10229 / NCIMB 13809 / X14).